Reading from the N-terminus, the 248-residue chain is Probable transcriptional regulatory protein Mnod_7401 (248 aa).

It belongs to the TACO1 family.

It localises to the cytoplasm. This chain is Probable transcriptional regulatory protein Mnod_7401, found in Methylobacterium nodulans (strain LMG 21967 / CNCM I-2342 / ORS 2060).